A 235-amino-acid chain; its full sequence is Urease accessory protein UreF (235 aa).

It belongs to the UreF family. In terms of assembly, ureD, UreF and UreG form a complex that acts as a GTP-hydrolysis-dependent molecular chaperone, activating the urease apoprotein by helping to assemble the nickel containing metallocenter of UreC. The UreE protein probably delivers the nickel.

The protein localises to the cytoplasm. In terms of biological role, required for maturation of urease via the functional incorporation of the urease nickel metallocenter. This Pseudoalteromonas translucida (strain TAC 125) protein is Urease accessory protein UreF.